The following is a 498-amino-acid chain: Probable cytosol aminopeptidase (498 aa).

Positions 263 and 268 each coordinate Mn(2+). K275 is an active-site residue. Residues D286, D345, and E347 each coordinate Mn(2+). R349 is a catalytic residue.

This sequence belongs to the peptidase M17 family. Requires Mn(2+) as cofactor.

It localises to the cytoplasm. It catalyses the reaction Release of an N-terminal amino acid, Xaa-|-Yaa-, in which Xaa is preferably Leu, but may be other amino acids including Pro although not Arg or Lys, and Yaa may be Pro. Amino acid amides and methyl esters are also readily hydrolyzed, but rates on arylamides are exceedingly low.. The enzyme catalyses Release of an N-terminal amino acid, preferentially leucine, but not glutamic or aspartic acids.. Its function is as follows. Presumably involved in the processing and regular turnover of intracellular proteins. Catalyzes the removal of unsubstituted N-terminal amino acids from various peptides. The polypeptide is Probable cytosol aminopeptidase (Rhodopseudomonas palustris (strain BisA53)).